A 795-amino-acid chain; its full sequence is MKFSEQWLREWVNPDISSHELSEQLSMAGLEVDAVEPVADEFHTVVVGEVIECGPHPDADKLQVTKVNVGEDEPVDIVCGASNCRLGIKVAVAKVGAVLPGDFKIKKAKLRGQPSNGMLCSFKELGLIDEHDGIIELPADAPVGEDYRKYLQLDDNSIDIDLTPNRGDCLSIRGIAREVGVLNRLDVTVPESNEVTASIEDTLSISLSAAEQCPRYLGRVIKGVDLTRPTPVWMTEKLRRSGIRSIDPVVDVTNYVLLELGHPMHAFDLDSLEGNIDVRLAKPKEQLTLLDEQLVELDEDTLVIADEKKALAMAGVYGGKNSGVTESSKNIFLESAFFAPDAILGKARRYGLHTDASHRYERGVDPQLQRTAMERATELLLAICGGEAGPVTEAVAEAFLPKRDGITLRACRLAKVLGVSIANDNVTEILERLGFDVSFDGEQWQVGIPSYRFDLSIEEDLIEEVARVYGYNSIQAAPPAAQLRMTERKESQLSTHQLVDAMVSRGYQEAITYSFVDPKHQALMFDETAALTLPHPISVDMSSMRVSLWPGLVGAVAHNQKRQQSVLAFVETGLRFIPDESAENGVRQEAVISGIRSGKAHSEHWSEGDRPVDFYDVKGDVEALLAQTGNAAAFRFVASQNPALHPGQSAAIYRGSEKVGDIGALHPKFDKALGLNQRTFVFELALSVVTERPLPQAKPVSRYPSIRRDLAVVVDKDLAAGELIAAMENVGVKQLVDLNLFDVYIGDGVAEGKQSLALSVTLQDSDKTLEEAEVTELMTKFIETLKSEFNATLRD.

A tRNA-binding domain is found at 39–148; that stretch reads ADEFHTVVVG…ADAPVGEDYR (110 aa). One can recognise a B5 domain in the interval 401 to 476; sequence PKRDGITLRA…RVYGYNSIQA (76 aa). The Mg(2+) site is built by D454, D460, E463, and E464. The FDX-ACB domain maps to 701 to 794; that stretch reads SRYPSIRRDL…LKSEFNATLR (94 aa).

This sequence belongs to the phenylalanyl-tRNA synthetase beta subunit family. Type 1 subfamily. As to quaternary structure, tetramer of two alpha and two beta subunits. The cofactor is Mg(2+).

It localises to the cytoplasm. It carries out the reaction tRNA(Phe) + L-phenylalanine + ATP = L-phenylalanyl-tRNA(Phe) + AMP + diphosphate + H(+). This chain is Phenylalanine--tRNA ligase beta subunit, found in Idiomarina loihiensis (strain ATCC BAA-735 / DSM 15497 / L2-TR).